Reading from the N-terminus, the 151-residue chain is Arginine repressor (151 aa).

Belongs to the ArgR family.

Its subcellular location is the cytoplasm. Its pathway is amino-acid biosynthesis; L-arginine biosynthesis [regulation]. Functionally, regulates arginine biosynthesis genes. The polypeptide is Arginine repressor (Haemophilus influenzae (strain PittGG)).